Reading from the N-terminus, the 149-residue chain is 3-hydroxyacyl-[acyl-carrier-protein] dehydratase FabZ (149 aa).

His48 is a catalytic residue.

Belongs to the thioester dehydratase family. FabZ subfamily.

The protein resides in the cytoplasm. It catalyses the reaction a (3R)-hydroxyacyl-[ACP] = a (2E)-enoyl-[ACP] + H2O. Its function is as follows. Involved in unsaturated fatty acids biosynthesis. Catalyzes the dehydration of short chain beta-hydroxyacyl-ACPs and long chain saturated and unsaturated beta-hydroxyacyl-ACPs. This chain is 3-hydroxyacyl-[acyl-carrier-protein] dehydratase FabZ, found in Thermomicrobium roseum (strain ATCC 27502 / DSM 5159 / P-2).